We begin with the raw amino-acid sequence, 310 residues long: MDVNNLSSNWKKLQETLKKQSASSSSKKRKTSDRETQNVTTKKQKIETIERKKSSLKKKRMSEGQEHGGDESAQEPMVKTISHKSSTATISEQSRTESKPTKVNEGRSPTAEIGKYVAMDCEMVGVGPNPDNDSALARVSIVNFNGEQVYDSYVRPKEMITDWRTHVSGISPKHMAEARSLEQVQKDVAEILDGRILVGHAVSNDLDALLLGHPKRDIRDTSKHPPYRKIAGGGSPRLKILASEFLGLNIQDGAHSSVEDAKATMLLYRRDKEAFEREHLKKWPIRVVVDKKENGEDQKKKKKKKKPRKR.

Over residues 1–11 (MDVNNLSSNWK) the composition is skewed to polar residues. The segment at 1–107 (MDVNNLSSNW…SKPTKVNEGR (107 aa)) is disordered. 2 stretches are compositionally biased toward basic and acidic residues: residues 44 to 53 (QKIETIERKK) and 61 to 70 (MSEGQEHGGD). Polar residues predominate over residues 83 to 93 (HKSSTATISEQ). A compositionally biased stretch (basic and acidic residues) spans 94–105 (SRTESKPTKVNE). The region spanning 115–277 (KYVAMDCEMV…YRRDKEAFER (163 aa)) is the Exonuclease domain. Positions 287–310 (VVVDKKENGEDQKKKKKKKKPRKR) are disordered. Basic and acidic residues predominate over residues 288–299 (VVDKKENGEDQK). The span at 300 to 310 (KKKKKKKPRKR) shows a compositional bias: basic residues.

Belongs to the REXO4 family.

It localises to the nucleus. Its function is as follows. Exoribonuclease involved in ribosome biosynthesis. Involved in the processing of ITS1, the internal transcribed spacer localized between the 18S and 5.8S rRNAs. The polypeptide is RNA exonuclease 4 (rex4) (Aspergillus fumigatus (strain ATCC MYA-4609 / CBS 101355 / FGSC A1100 / Af293) (Neosartorya fumigata)).